The chain runs to 598 residues: Cytochrome P450 monooxygenase phmB (598 aa).

The helical transmembrane segment at 107 to 127 (VAAKIAALLFVAGLFWAVSVL) threads the bilayer. 3 N-linked (GlcNAc...) asparagine glycosylation sites follow: Asn-171, Asn-428, and Asn-494. Heme is bound at residue Cys-542. Asn-549 and Asn-581 each carry an N-linked (GlcNAc...) asparagine glycan.

The protein belongs to the cytochrome P450 family. Requires heme as cofactor.

Its subcellular location is the membrane. The protein operates within mycotoxin biosynthesis. Its function is as follows. Cytochrome P450 monooxygenase; part of the gene cluster that mediates the biosynthesis of the mycotoxins phomacins, leucine-derived cytochalasans with potent actin polymerization-inhibitory activities and monocot-specific antigerminative activities. The first step in the pathway is catalyzed by the hybrid PKS-NRPS phmA, assisted by the enoyl reductase phmE, that are responsible for fusion of the leucine precursor and the polyketide backbone to produce a 2-pyrrolidone intermediate. The polyketide synthase module (PKS) of phmA is responsible for the synthesis of the polyketide backbone and the downstream nonribosomal peptide synthetase (NRPS) amidates the carboxyl end of the polyketide with the leucine precursor. Because phmA lacks a designated enoylreductase (ER) domain, the required activity is provided the enoyl reductase phmE. Reduction by the hydrolyase phmG, followed by dehydration and intra-molecular Diels-Alder cyclization by the Diels-Alderase phmD then yield the required isoindolone-fused macrocycle. A number of oxidative steps catalyzed by the tailoring cytochrome P450 monooxygenase phmB, the FAD-linked oxidoreductase phmC and the short-chain dehydrogenase/reductase phmF, are further required to afford the final products, phomacin D and phomacin E. In Phaeosphaeria nodorum (strain SN15 / ATCC MYA-4574 / FGSC 10173) (Glume blotch fungus), this protein is Cytochrome P450 monooxygenase phmB.